The chain runs to 496 residues: ATP synthase subunit beta, chloroplastic (496 aa).

ATP is bound at residue 170 to 177; the sequence is GGAGVGKT.

It belongs to the ATPase alpha/beta chains family. F-type ATPases have 2 components, CF(1) - the catalytic core - and CF(0) - the membrane proton channel. CF(1) has five subunits: alpha(3), beta(3), gamma(1), delta(1), epsilon(1). CF(0) has four main subunits: a(1), b(1), b'(1) and c(9-12).

It localises to the plastid. The protein resides in the chloroplast thylakoid membrane. It carries out the reaction ATP + H2O + 4 H(+)(in) = ADP + phosphate + 5 H(+)(out). Its function is as follows. Produces ATP from ADP in the presence of a proton gradient across the membrane. The catalytic sites are hosted primarily by the beta subunits. In Dioscorea elephantipes (Elephant's foot yam), this protein is ATP synthase subunit beta, chloroplastic.